Consider the following 310-residue polypeptide: Protease HtpX homolog (310 aa).

2 consecutive transmembrane segments (helical) span residues 16–36 (NAVLATYCVIFAFIGLLVDVI) and 55–75 (IFPTITIIMFLVAFVIIVVCI). His-166 is a Zn(2+) binding site. Glu-167 is a catalytic residue. His-170 contributes to the Zn(2+) binding site. The next 2 membrane-spanning stretches (helical) occupy residues 182–202 (VGILSNIMLLVANFSVYFFMG) and 214–234 (MILLVLQIILPFLTLLLQMYL). Glu-239 lines the Zn(2+) pocket.

It belongs to the peptidase M48B family. Requires Zn(2+) as cofactor.

Its subcellular location is the cell inner membrane. The polypeptide is Protease HtpX homolog (Helicobacter pylori (strain Shi470)).